Consider the following 327-residue polypeptide: Pyruvate dehydrogenase E1 component subunit beta (327 aa).

A thiamine diphosphate-binding site is contributed by E60.

Heterodimer of an alpha and a beta chain. Thiamine diphosphate is required as a cofactor.

It carries out the reaction N(6)-[(R)-lipoyl]-L-lysyl-[protein] + pyruvate + H(+) = N(6)-[(R)-S(8)-acetyldihydrolipoyl]-L-lysyl-[protein] + CO2. Its function is as follows. The pyruvate dehydrogenase complex catalyzes the overall conversion of pyruvate to acetyl-CoA and CO(2). It contains multiple copies of three enzymatic components: pyruvate dehydrogenase (E1), dihydrolipoamide acetyltransferase (E2) and lipoamide dehydrogenase (E3). In Acholeplasma laidlawii, this protein is Pyruvate dehydrogenase E1 component subunit beta (pdhB).